The following is a 275-amino-acid chain: NH(3)-dependent NAD(+) synthetase (275 aa).

46 to 53 provides a ligand contact to ATP; that stretch reads GISGGQDS. Mg(2+) is bound at residue aspartate 52. Residue arginine 140 participates in deamido-NAD(+) binding. Residue threonine 160 participates in ATP binding. Mg(2+) is bound at residue glutamate 165. Deamido-NAD(+) is bound by residues lysine 173 and aspartate 180. ATP contacts are provided by lysine 189 and threonine 211. 260–261 contributes to the deamido-NAD(+) binding site; it reads HK.

It belongs to the NAD synthetase family. Homodimer.

The catalysed reaction is deamido-NAD(+) + NH4(+) + ATP = AMP + diphosphate + NAD(+) + H(+). The protein operates within cofactor biosynthesis; NAD(+) biosynthesis; NAD(+) from deamido-NAD(+) (ammonia route): step 1/1. Catalyzes the ATP-dependent amidation of deamido-NAD to form NAD. Uses ammonia as a nitrogen source. The polypeptide is NH(3)-dependent NAD(+) synthetase (Enterobacter sp. (strain 638)).